The following is a 151-amino-acid chain: 6,7-dimethyl-8-ribityllumazine synthase (151 aa).

Residues phenylalanine 15, 49 to 51 (AVE), and 73 to 75 (AVI) contribute to the 5-amino-6-(D-ribitylamino)uracil site. 78-79 (ET) is a (2S)-2-hydroxy-3-oxobutyl phosphate binding site. Catalysis depends on histidine 81, which acts as the Proton donor. Phenylalanine 106 provides a ligand contact to 5-amino-6-(D-ribitylamino)uracil. Residue arginine 120 participates in (2S)-2-hydroxy-3-oxobutyl phosphate binding.

This sequence belongs to the DMRL synthase family. In terms of assembly, forms an icosahedral capsid composed of 60 subunits, arranged as a dodecamer of pentamers.

The catalysed reaction is (2S)-2-hydroxy-3-oxobutyl phosphate + 5-amino-6-(D-ribitylamino)uracil = 6,7-dimethyl-8-(1-D-ribityl)lumazine + phosphate + 2 H2O + H(+). Its pathway is cofactor biosynthesis; riboflavin biosynthesis; riboflavin from 2-hydroxy-3-oxobutyl phosphate and 5-amino-6-(D-ribitylamino)uracil: step 1/2. Functionally, catalyzes the formation of 6,7-dimethyl-8-ribityllumazine by condensation of 5-amino-6-(D-ribitylamino)uracil with 3,4-dihydroxy-2-butanone 4-phosphate. This is the penultimate step in the biosynthesis of riboflavin. In Coxiella burnetii (strain CbuG_Q212) (Coxiella burnetii (strain Q212)), this protein is 6,7-dimethyl-8-ribityllumazine synthase.